A 97-amino-acid chain; its full sequence is Translation initiation factor 1A (97 aa).

The region spanning 8–82 is the S1-like domain; it reads IRVRLPDRKK…DRADIVWRYT (75 aa).

Belongs to the eIF-1A family.

In terms of biological role, seems to be required for maximal rate of protein biosynthesis. Enhances ribosome dissociation into subunits and stabilizes the binding of the initiator Met-tRNA(I) to 40 S ribosomal subunits. This is Translation initiation factor 1A (eIF1A) from Archaeoglobus fulgidus (strain ATCC 49558 / DSM 4304 / JCM 9628 / NBRC 100126 / VC-16).